The following is a 518-amino-acid chain: Cytochrome P450 CYP72A219 (518 aa).

Residues 2 to 22 (ELVLKLISSFCAIVVVILLGW) traverse the membrane as a helical segment. Heme is bound at residue Cys465.

The protein belongs to the cytochrome P450 family. Heme is required as a cofactor.

The protein resides in the membrane. In terms of biological role, probable heme-thiolate monooxygenase. This is Cytochrome P450 CYP72A219 from Panax ginseng (Korean ginseng).